The following is a 549-amino-acid chain: Glucose-6-phosphate isomerase (549 aa).

N6-acetyllysine occurs at positions 80, 228, and 234. The Proton donor role is filled by Glu355. Residues His386 and Lys514 contribute to the active site.

The protein belongs to the GPI family.

Its subcellular location is the cytoplasm. The catalysed reaction is alpha-D-glucose 6-phosphate = beta-D-fructose 6-phosphate. The protein operates within carbohydrate biosynthesis; gluconeogenesis. It functions in the pathway carbohydrate degradation; glycolysis; D-glyceraldehyde 3-phosphate and glycerone phosphate from D-glucose: step 2/4. Catalyzes the reversible isomerization of glucose-6-phosphate to fructose-6-phosphate. The chain is Glucose-6-phosphate isomerase from Escherichia coli O139:H28 (strain E24377A / ETEC).